The chain runs to 157 residues: SsrA-binding protein (157 aa).

It belongs to the SmpB family.

It is found in the cytoplasm. In terms of biological role, required for rescue of stalled ribosomes mediated by trans-translation. Binds to transfer-messenger RNA (tmRNA), required for stable association of tmRNA with ribosomes. tmRNA and SmpB together mimic tRNA shape, replacing the anticodon stem-loop with SmpB. tmRNA is encoded by the ssrA gene; the 2 termini fold to resemble tRNA(Ala) and it encodes a 'tag peptide', a short internal open reading frame. During trans-translation Ala-aminoacylated tmRNA acts like a tRNA, entering the A-site of stalled ribosomes, displacing the stalled mRNA. The ribosome then switches to translate the ORF on the tmRNA; the nascent peptide is terminated with the 'tag peptide' encoded by the tmRNA and targeted for degradation. The ribosome is freed to recommence translation, which seems to be the essential function of trans-translation. This chain is SsrA-binding protein, found in Chlorobium phaeovibrioides (strain DSM 265 / 1930) (Prosthecochloris vibrioformis (strain DSM 265)).